Reading from the N-terminus, the 280-residue chain is tRNA pseudouridine synthase A (280 aa).

The active-site Nucleophile is the Asp55. Tyr110 lines the substrate pocket.

The protein belongs to the tRNA pseudouridine synthase TruA family.

It catalyses the reaction uridine(38/39/40) in tRNA = pseudouridine(38/39/40) in tRNA. Its function is as follows. Formation of pseudouridine at positions 38, 39 and 40 in the anticodon stem and loop of transfer RNAs. In Methanosphaerula palustris (strain ATCC BAA-1556 / DSM 19958 / E1-9c), this protein is tRNA pseudouridine synthase A.